Here is a 394-residue protein sequence, read N- to C-terminus: Na(+)/H(+) antiporter NhaA (394 aa).

The next 11 helical transmembrane spans lie at 11-31, 59-79, 95-115, 125-145, 155-175, 177-197, 203-220, 254-274, 296-316, 328-348, and 365-385; these read LEAA…IFAN, LLMW…GMEV, IFPA…YWFI, GWAI…ALLS, FLLA…ALFF, HEMS…LVAM, TGLI…ASVL, ALAP…NAGV, LIIG…LLGI, IFAI…IAGL, and LGIL…LKIT.

It belongs to the NhaA Na(+)/H(+) (TC 2.A.33) antiporter family.

It localises to the cell inner membrane. The catalysed reaction is Na(+)(in) + 2 H(+)(out) = Na(+)(out) + 2 H(+)(in). Functionally, na(+)/H(+) antiporter that extrudes sodium in exchange for external protons. This Actinobacillus pleuropneumoniae serotype 3 (strain JL03) protein is Na(+)/H(+) antiporter NhaA.